We begin with the raw amino-acid sequence, 5209 residues long: E3 ubiquitin-protein ligase rnf213-alpha (5209 aa).

Composition is skewed to polar residues over residues 27-52 (SQSY…QITN) and 61-72 (ESKSLEIQNANV). Residues 27–373 (SQSYETTQGT…KRNTRSTQHI (347 aa)) form a disordered region. Over residues 85–101 (PKKKKRKKRKKEKKKKS) the composition is skewed to basic residues. Residues 108–118 (SSLTSDLSDIS) show a composition bias toward low complexity. Basic and acidic residues predominate over residues 119-128 (LTDKEKKMDT). Composition is skewed to polar residues over residues 167–177 (LSASALTTGSS) and 184–195 (IGTTQKPVSASA). Over residues 205–218 (QTKEEKVKCKDEGQ) the composition is skewed to basic and acidic residues. A compositionally biased stretch (polar residues) spans 219–243 (KSLSAKAQHTPNANVDQNANVQSDA). A compositionally biased stretch (low complexity) spans 256–269 (KSSSVKTKPSKSTV). Composition is skewed to basic and acidic residues over residues 271–288 (DPKK…RDNE) and 330–352 (MKVE…SKES). Residues 2036-2041 (GVGKSL), E2135, D2193, R2252, K2535, and S2610 contribute to the ATP site. Positions 4005, 4008, 4020, 4022, 4025, 4028, 4040, 4043, 4507, and 4511 each coordinate Zn(2+). The segment at 4005–4043 (CPVCMGDPRDPLSLPCDHIYCLTCIRQWLVPGQMHCPLC) adopts an RING-type zinc-finger fold. The segment at 4487–4557 (MPDDMLAVAQ…MQIQADRTQS (71 aa)) adopts an RZ-type zinc-finger fold. C4518 serves as the catalytic Nucleophile; for E3 ubiquitin-lipopolysaccharide ligase activity. Zn(2+) is bound by residues C4527 and C4530.

It belongs to the AAA ATPase family.

Its subcellular location is the cytoplasm. It is found in the cytosol. The protein resides in the lipid droplet. The enzyme catalyses S-ubiquitinyl-[E2 ubiquitin-conjugating enzyme]-L-cysteine + [acceptor protein]-L-lysine = [E2 ubiquitin-conjugating enzyme]-L-cysteine + N(6)-ubiquitinyl-[acceptor protein]-L-lysine.. It carries out the reaction ATP + H2O = ADP + phosphate + H(+). It participates in protein modification; protein ubiquitination. Its function is as follows. Atypical E3 ubiquitin ligase that can catalyze ubiquitination of both proteins and lipids, and which is involved in various processes, such as lipid metabolism, angiogenesis and cell-autonomous immunity. Acts as a key immune sensor by catalyzing ubiquitination of the lipid A moiety of bacterial lipopolysaccharide (LPS) via its RZ-type zinc-finger: restricts the proliferation of cytosolic bacteria, such as Salmonella, by generating the bacterial ubiquitin coat through the ubiquitination of LPS. Ubiquitination of LPS triggers cell-autonomous immunity, such as antibacterial autophagy, leading to degradation of the microbial invader. Involved in lipid metabolism by regulating fat storage and lipid droplet formation; act by inhibiting the lipolytic process. Also regulates lipotoxicity by inhibiting desaturation of fatty acids. Also acts as an E3 ubiquitin-protein ligase via its RING-type zinc finger. Involved in the non-canonical Wnt signaling pathway in vascular development: acts by mediating ubiquitination and degradation of proteins downstream of rspo3, leading to inhibit the non-canonical Wnt signaling pathway and promoting vessel regression. Also has ATPase activity; ATPase activity is required for ubiquitination of LPS. Also involved in neuromuscular regulation. This is E3 ubiquitin-protein ligase rnf213-alpha from Danio rerio (Zebrafish).